Here is a 186-residue protein sequence, read N- to C-terminus: Adenine phosphoribosyltransferase (186 aa).

This sequence belongs to the purine/pyrimidine phosphoribosyltransferase family. As to quaternary structure, homodimer.

It localises to the cytoplasm. The enzyme catalyses AMP + diphosphate = 5-phospho-alpha-D-ribose 1-diphosphate + adenine. The protein operates within purine metabolism; AMP biosynthesis via salvage pathway; AMP from adenine: step 1/1. Functionally, catalyzes a salvage reaction resulting in the formation of AMP, that is energically less costly than de novo synthesis. The protein is Adenine phosphoribosyltransferase of Xanthomonas campestris pv. campestris (strain 8004).